Consider the following 318-residue polypeptide: Molybdenum cofactor insertion chaperone PaoD (318 aa).

Homodimer in solution. Interacts with MocA.

In terms of biological role, chaperone required for the production of an active PaoABC aldehyde oxidoreductase. Stabilizes the PaoC subunit and is required for the insertion of the molybdenum cofactor into this subunit. Binds molybdenum cofactor. Binds the molybdopterin cytosine dinucleotide (MCD) form of the cofactor after its formation by the molybdenum cofactor cytidylyltransferase MocA. This Escherichia coli (strain K12) protein is Molybdenum cofactor insertion chaperone PaoD.